Consider the following 469-residue polypeptide: Trigger factor (469 aa).

The region spanning 165 to 250 is the PPIase FKBP-type domain; it reads GDRVTIDYIG…VKAVCKSDEL (86 aa). Positions 444–460 are enriched in basic and acidic residues; sequence DLTEKKPLKKKTAEKVS. The interval 444 to 469 is disordered; that stretch reads DLTEKKPLKKKTAEKVSTKKKAPKKS.

Belongs to the FKBP-type PPIase family. Tig subfamily.

It localises to the cytoplasm. The catalysed reaction is [protein]-peptidylproline (omega=180) = [protein]-peptidylproline (omega=0). Functionally, involved in protein export. Acts as a chaperone by maintaining the newly synthesized protein in an open conformation. Functions as a peptidyl-prolyl cis-trans isomerase. In Bartonella henselae (strain ATCC 49882 / DSM 28221 / CCUG 30454 / Houston 1) (Rochalimaea henselae), this protein is Trigger factor.